The following is a 237-amino-acid chain: Eukaryotic translation initiation factor 3 subunit J (237 aa).

The disordered stretch occupies residues 20 to 64 (ANNINKWEGEDDDEDVKESWEDEEEKKDEEKPTKTEAPAKTKPNK). Positions 28–46 (GEDDDEDVKESWEDEEEKK) are enriched in acidic residues. Over residues 47–58 (DEEKPTKTEAPA) the composition is skewed to basic and acidic residues. Residues 63–115 (NKVLKAKLLEQECLEKEEEAKRLANMSTEEKLAEKLRLQKIQEESDLKSALET) are a coiled coil.

This sequence belongs to the eIF-3 subunit J family. As to quaternary structure, component of the eukaryotic translation initiation factor 3 (eIF-3) complex. The eIF-3 complex interacts with pix.

Its subcellular location is the cytoplasm. Component of the eukaryotic translation initiation factor 3 (eIF-3) complex, which is involved in protein synthesis of a specialized repertoire of mRNAs and, together with other initiation factors, stimulates binding of mRNA and methionyl-tRNAi to the 40S ribosome. The eIF-3 complex specifically targets and initiates translation of a subset of mRNAs involved in cell proliferation. The protein is Eukaryotic translation initiation factor 3 subunit J of Drosophila grimshawi (Hawaiian fruit fly).